The chain runs to 172 residues: UPF0316 protein Clos_0555 (172 aa).

3 consecutive transmembrane segments (helical) span residues A3–I23, V34–V54, and P61–L81.

The protein belongs to the UPF0316 family.

Its subcellular location is the cell membrane. The protein is UPF0316 protein Clos_0555 of Alkaliphilus oremlandii (strain OhILAs) (Clostridium oremlandii (strain OhILAs)).